The primary structure comprises 92 residues: Small ribosomal subunit protein uS17 (92 aa).

The protein belongs to the universal ribosomal protein uS17 family. Part of the 30S ribosomal subunit.

In terms of biological role, one of the primary rRNA binding proteins, it binds specifically to the 5'-end of 16S ribosomal RNA. The chain is Small ribosomal subunit protein uS17 from Cupriavidus necator (strain ATCC 17699 / DSM 428 / KCTC 22496 / NCIMB 10442 / H16 / Stanier 337) (Ralstonia eutropha).